Here is a 134-residue protein sequence, read N- to C-terminus: D-ribose pyranase (134 aa).

Histidine 20 (proton donor) is an active-site residue. Residues aspartate 28, histidine 99, and 123–125 (YSN) each bind substrate.

The protein belongs to the RbsD / FucU family. RbsD subfamily. As to quaternary structure, homodecamer.

It is found in the cytoplasm. It carries out the reaction beta-D-ribopyranose = beta-D-ribofuranose. It participates in carbohydrate metabolism; D-ribose degradation; D-ribose 5-phosphate from beta-D-ribopyranose: step 1/2. Its function is as follows. Catalyzes the interconversion of beta-pyran and beta-furan forms of D-ribose. The chain is D-ribose pyranase from Staphylococcus aureus (strain Mu3 / ATCC 700698).